The primary structure comprises 254 residues: Thiazole synthase (254 aa).

Lys96 functions as the Schiff-base intermediate with DXP in the catalytic mechanism. 1-deoxy-D-xylulose 5-phosphate-binding positions include Gly157, 183-184 (AG), and 205-206 (NT).

The protein belongs to the ThiG family. Homotetramer. Forms heterodimers with either ThiH or ThiS.

The protein localises to the cytoplasm. The enzyme catalyses [ThiS sulfur-carrier protein]-C-terminal-Gly-aminoethanethioate + 2-iminoacetate + 1-deoxy-D-xylulose 5-phosphate = [ThiS sulfur-carrier protein]-C-terminal Gly-Gly + 2-[(2R,5Z)-2-carboxy-4-methylthiazol-5(2H)-ylidene]ethyl phosphate + 2 H2O + H(+). It functions in the pathway cofactor biosynthesis; thiamine diphosphate biosynthesis. Its function is as follows. Catalyzes the rearrangement of 1-deoxy-D-xylulose 5-phosphate (DXP) to produce the thiazole phosphate moiety of thiamine. Sulfur is provided by the thiocarboxylate moiety of the carrier protein ThiS. In vitro, sulfur can be provided by H(2)S. The sequence is that of Thiazole synthase from Clostridium perfringens (strain 13 / Type A).